A 317-amino-acid polypeptide reads, in one-letter code: Pantothenate kinase (317 aa).

99–106 (GSVSVGKS) provides a ligand contact to ATP.

This sequence belongs to the prokaryotic pantothenate kinase family.

Its subcellular location is the cytoplasm. It carries out the reaction (R)-pantothenate + ATP = (R)-4'-phosphopantothenate + ADP + H(+). It participates in cofactor biosynthesis; coenzyme A biosynthesis; CoA from (R)-pantothenate: step 1/5. The protein is Pantothenate kinase of Mannheimia succiniciproducens (strain KCTC 0769BP / MBEL55E).